Here is a 291-residue protein sequence, read N- to C-terminus: Phosphatidylglycerol--prolipoprotein diacylglyceryl transferase (291 aa).

7 helical membrane-spanning segments follow: residues V21–A41, L60–Y80, W96–F116, F130–G150, S198–I218, G225–F245, and I260–W280. Residue R143 coordinates a 1,2-diacyl-sn-glycero-3-phospho-(1'-sn-glycerol).

The protein belongs to the Lgt family.

It is found in the cell inner membrane. The catalysed reaction is L-cysteinyl-[prolipoprotein] + a 1,2-diacyl-sn-glycero-3-phospho-(1'-sn-glycerol) = an S-1,2-diacyl-sn-glyceryl-L-cysteinyl-[prolipoprotein] + sn-glycerol 1-phosphate + H(+). Its pathway is protein modification; lipoprotein biosynthesis (diacylglyceryl transfer). In terms of biological role, catalyzes the transfer of the diacylglyceryl group from phosphatidylglycerol to the sulfhydryl group of the N-terminal cysteine of a prolipoprotein, the first step in the formation of mature lipoproteins. The chain is Phosphatidylglycerol--prolipoprotein diacylglyceryl transferase from Cronobacter sakazakii (strain ATCC BAA-894) (Enterobacter sakazakii).